A 1182-amino-acid chain; its full sequence is IQ motif and SEC7 domain-containing protein 3 (1182 aa).

Positions 20–56 (AIVQNQQSLIHTQRERIDELERRLDELSAENRSLWEH) form a coiled coil. 2 disordered regions span residues 62–157 (AQPP…ERPP) and 230–275 (AAGR…RQQP). Positions 63–78 (QPPPGLVPPSSAPLPA) are enriched in pro residues. 2 stretches are compositionally biased toward low complexity: residues 79 to 105 (APAT…AAAP) and 254 to 263 (GAGAASPRAG). The residue at position 259 (Ser259) is a Phosphoserine. In terms of domain architecture, IQ spans 315 to 344 (SRRAACTIQTAFRQYQLSKNFEKIRNSLLE). 2 disordered regions span residues 444–479 (AGPP…AHSG) and 521–616 (EPAA…ASAS). The span at 533-548 (SGREAPEAPAVGREDA) shows a compositional bias: basic and acidic residues. Positions 555–569 (AEAAASGAADGATAP) are enriched in low complexity. Positions 572 to 581 (EEEEEEEETA) are enriched in acidic residues. A compositionally biased stretch (low complexity) spans 598-616 (SSSSTSTKSAKSGSEASAS). Residues 644-837 (TLSTDTLRKR…VGIYERIQQK (194 aa)) form the SEC7 domain. The PH domain occupies 850–983 (TKVEKSIVGM…LKESIAEVTE (134 aa)). A coiled-coil region spans residues 964-992 (SDEMQKFVEDLKESIAEVTELEQIRIEWE). Disordered regions lie at residues 1002–1090 (LSFK…PGTL) and 1121–1182 (YTSS…RSLV). The span at 1022–1033 (AKREAALRERPA) shows a compositional bias: basic and acidic residues. The segment covering 1043 to 1052 (NRLQTSQHNS) has biased composition (polar residues). The segment covering 1061–1087 (PVPPPDLQPSPPRQQTPPLPPPPPTPP) has biased composition (pro residues). Low complexity predominate over residues 1121–1132 (YTSSSSDSCGST). A compositionally biased stretch (pro residues) spans 1147 to 1157 (PPLPPPPPPYN).

It belongs to the BRAG family. In terms of assembly, interacts with DLG1 and DLG4. Interacts with GPHN. In terms of tissue distribution, expressed specifically in the adult brain, predominantly in the cerebral cortex and the olfactory bulb, but not in the fetal brain. Expressed only in mature neurons, but not in undifferentiated neural stem precursor cells (NSPCs), nor in glioma cells.

The protein localises to the cytoplasm. It localises to the postsynaptic density. Acts as a guanine nucleotide exchange factor (GEF) for ARF1. The protein is IQ motif and SEC7 domain-containing protein 3 (IQSEC3) of Homo sapiens (Human).